A 275-amino-acid chain; its full sequence is Nitrate import permease protein NrtB (275 aa).

7 consecutive transmembrane segments (helical) span residues valine 25–glycine 45, valine 89–serine 109, isoleucine 120–leucine 140, alanine 147–alanine 167, phenylalanine 189–isoleucine 209, tryptophan 213–tryptophan 233, and serine 238–leucine 258. The 181-residue stretch at isoleucine 82–isoleucine 262 folds into the ABC transmembrane type-1 domain.

Belongs to the binding-protein-dependent transport system permease family. CysTW subfamily. As to quaternary structure, the complex is composed of two ATP-binding proteins (NrtC and NrtD), two transmembrane proteins (NrtB) and a solute-binding protein (NrtA).

The protein resides in the cell inner membrane. Its function is as follows. Part of the ABC transporter complex NrtABCD involved in nitrate uptake. The complex is probably also involved in nitrite transport. Probably responsible for the translocation of the substrate across the membrane. This is Nitrate import permease protein NrtB (nrtB) from Synechocystis sp. (strain ATCC 27184 / PCC 6803 / Kazusa).